A 153-amino-acid polypeptide reads, in one-letter code: Hydrogenase expression/formation protein HoxT (153 aa).

Belongs to the HupJ family.

The sequence is that of Hydrogenase expression/formation protein HoxT (hoxT) from Azotobacter vinelandii.